The chain runs to 529 residues: Bifunctional purine biosynthesis protein PurH (529 aa).

One can recognise an MGS-like domain in the interval 1 to 148; that stretch reads MNNVRPIRRA…KNHKDTTIVV (148 aa).

It belongs to the PurH family.

It catalyses the reaction (6R)-10-formyltetrahydrofolate + 5-amino-1-(5-phospho-beta-D-ribosyl)imidazole-4-carboxamide = 5-formamido-1-(5-phospho-D-ribosyl)imidazole-4-carboxamide + (6S)-5,6,7,8-tetrahydrofolate. The enzyme catalyses IMP + H2O = 5-formamido-1-(5-phospho-D-ribosyl)imidazole-4-carboxamide. It functions in the pathway purine metabolism; IMP biosynthesis via de novo pathway; 5-formamido-1-(5-phospho-D-ribosyl)imidazole-4-carboxamide from 5-amino-1-(5-phospho-D-ribosyl)imidazole-4-carboxamide (10-formyl THF route): step 1/1. The protein operates within purine metabolism; IMP biosynthesis via de novo pathway; IMP from 5-formamido-1-(5-phospho-D-ribosyl)imidazole-4-carboxamide: step 1/1. This chain is Bifunctional purine biosynthesis protein PurH, found in Shewanella frigidimarina (strain NCIMB 400).